The sequence spans 422 residues: Protein king tubby 2 (422 aa).

A disordered region spans residues 49–169; sequence PSNPDQIISS…ASGHNDAEGD (121 aa). The segment covering 57–81 has biased composition (low complexity); that stretch reads SSGSPTTVTATGTTTGSVTTTPTSP.

Belongs to the TUB family.

The protein resides in the cytoplasm. Its subcellular location is the nucleus. The polypeptide is Protein king tubby 2 (king-tubby2) (Culex quinquefasciatus (Southern house mosquito)).